The primary structure comprises 1358 residues: DNA-directed RNA polymerase subunit beta (1358 aa).

Belongs to the RNA polymerase beta chain family. As to quaternary structure, the RNAP catalytic core consists of 2 alpha, 1 beta, 1 beta' and 1 omega subunit. When a sigma factor is associated with the core the holoenzyme is formed, which can initiate transcription.

It carries out the reaction RNA(n) + a ribonucleoside 5'-triphosphate = RNA(n+1) + diphosphate. In terms of biological role, DNA-dependent RNA polymerase catalyzes the transcription of DNA into RNA using the four ribonucleoside triphosphates as substrates. This Francisella tularensis subsp. holarctica (strain FTNF002-00 / FTA) protein is DNA-directed RNA polymerase subunit beta.